A 1077-amino-acid chain; its full sequence is MRTDERRRWWVKPKKHITLVFITITMIIQFQMKGCVSCVETERMGLLQLKSYLKNLVDAEEEEEEGLSILKSWTHHEGDCCRWERVKCSDAINGHVIGLSLDRLVPVAFESQTRSLNLSLLHSFPQLQSLNLSWNWFTNLSDHFLGFKSFGTLDKLTTLDFSHNMFDNSIVPFLNAATSIRSLHLESNYMEGVFPPQELSNMTNLRVLNLKDNSFSFLSSQGLTDFRDLEVLDLSFNGVNDSEASHSLSTAKLKTLDLNFNPLSDFSQLKGLESLQELQVLKLRGNKFNHTLSTHVLKDLKMLQELDLSDNGFTNLDHGRGLEIPTSLQVLDFKRNQLSLTHEGYLGICRLMKLRELDLSSNALTSLPYCLGNLTHLRTLDLSNNQLNGNLSSFVSGLPSVLEYLSLLDNNFDGSFLFNSLVNQTRLTVFKLSSKVGVIQVQTESSWAPLFQLKMLYLSNCSLGSTMLGFLVHQRDLCFVDLSHNKLTGTFPTWLVKNNTRLQTILLSGNSLTKLQLPILVHGLQVLDISSNMIYDSIQEDIGMVFPNLRFMNFSSNHFQGTIPSSIGEMKSLQVLDMSSNGLYGQLPIMFLSGCYSLRVLKLSNNQLQGKIFSKHANLTGLVGLFLDGNNFTGSLEEGLLKSKNLTLLDISDNRFSGMLPLWIGRISRLSYLYMSGNQLKGPFPFLRQSPWVEVMDISHNSFSGSIPRNVNFPSLRELRLQNNEFTGLVPGNLFKAAGLEVLDLRNNNFSGKILNTIDQTSKLRILLLRNNSFQTYIPGKICQLSEVGLLDLSHNQFRGPIPSCFSKMSFGAEQNDRTMSLVADFDFSYITFLPHCQYGSHLNLDDGVRNGYQPKPATVVDFLTKSRYEAYQGDILRYMHGLDLSSNELSGEIPIEIGDLQNIRSLNLSSNRLTGSIPDSISKLKGLESLDLSNNKLDGSIPPALADLNSLGYLNISYNNLSGEIPFKGHLVTFDERSYIGNAHLCGLPTNKNCISQRVPEPPSVSTHAKEEENEEEGNVIDMVWFYWTCAAVYISTSLALFAFLYIDSRWSREWFYRVDLCVHHILQFKRSSVCN.

Positions 1–38 are cleaved as a signal peptide; sequence MRTDERRRWWVKPKKHITLVFITITMIIQFQMKGCVSC. The tract at residues 39-120 is N-cap; sequence VETERMGLLQ…SQTRSLNLSL (82 aa). The Extracellular portion of the chain corresponds to 39–1024; the sequence is VETERMGLLQ…NEEEGNVIDM (986 aa). N-linked (GlcNAc...) asparagine glycans are attached at residues asparagine 117, asparagine 131, and asparagine 139. 12 LRR repeats span residues 124 to 147, 153 to 176, 177 to 201, 202 to 225, 227 to 250, 251 to 274, 275 to 299, 300 to 324, 326 to 348, 351 to 376, 378 to 397, and 399 to 424; these read FPQL…FLGF, LDKL…FLNA, ATSI…ELSN, MTNL…GLTD, RDLE…SLST, AKLK…GLES, LQEL…VLKD, LKML…GLEI, TSLQ…YLGI, LMKL…NLTH, RTLD…FVSG, and PSVL…LVNQ. Asparagine 201 carries N-linked (GlcNAc...) asparagine glycosylation. Asparagine 240 is a glycosylation site (N-linked (GlcNAc...) asparagine). A glycan (N-linked (GlcNAc...) asparagine) is linked at asparagine 289. 3 N-linked (GlcNAc...) asparagine glycosylation sites follow: asparagine 373, asparagine 390, and asparagine 423. The LRR 13; degenerate repeat unit spans residues 425–449; sequence TRLTVFKLSSKVGVIQVQTESSWAP. LRR repeat units lie at residues 450-473, 474-498, 499-522, 524-545, 546-570, 572-594, 595-621, 623-643, 644-666, 667-694, 696-713, 714-737, 739-761, 762-785, 786-808, 877-901, 902-925, 927-949, and 951-970; these read LFQL…FLVH, QRDL…LVKN, NTRL…ILVH, LQVL…IGMV, FPNL…IGEM, SLQV…FLSG, CYSL…NLTG, VGLF…LLKS, KNLT…WIGR, ISRL…PWVE, MDIS…NVNF, PSLR…LFKA, GLEV…IDQT, SKLR…ICQL, SEVG…CFSK, LRYM…IGDL, QNIR…ISKL, GLES…LADL, and SLGY…PFKG. N-linked (GlcNAc...) asparagine glycosylation is found at asparagine 460 and asparagine 498. N-linked (GlcNAc...) asparagine glycosylation is present at asparagine 553. Residues asparagine 618, asparagine 631, and asparagine 645 are each glycosylated (N-linked (GlcNAc...) asparagine). N-linked (GlcNAc...) asparagine glycosylation is found at asparagine 749 and asparagine 771. N-linked (GlcNAc...) asparagine glycosylation is present at asparagine 908. N-linked (GlcNAc...) asparagine glycans are attached at residues asparagine 956 and asparagine 961. The tract at residues 971–1024 is C-cap/acidic domain; the sequence is HLVTFDERSYIGNAHLCGLPTNKNCISQRVPEPPSVSTHAKEEENEEEGNVIDM. The helical transmembrane segment at 1025 to 1045 threads the bilayer; sequence VWFYWTCAAVYISTSLALFAF. The Cytoplasmic segment spans residues 1046-1077; that stretch reads LYIDSRWSREWFYRVDLCVHHILQFKRSSVCN.

The protein belongs to the RLP family.

The protein localises to the cell membrane. Involved in plant defense. Confers resistance to the bacterial pathogen Xanthomonas through recognition of the microbe-associated molecular pattern (MAMP) eMax. Functionality seems to depend on the presence of the receptor kinase SOBIR1 as an adapter protein. The sequence is that of Receptor-like protein 1 from Arabidopsis thaliana (Mouse-ear cress).